A 1492-amino-acid polypeptide reads, in one-letter code: Neogenin (1492 aa).

Positions 1–36 (MAAEREAGRLLCTSSSRRCCPPPPLLLLLPLLLLLG) are cleaved as a signal peptide. Topologically, residues 37–1136 (RPASGAAATK…PTSPLDSNML (1100 aa)) are extracellular. Ig-like C2-type domains are found at residues 63-158 (PFYF…AKLT), 163-249 (PRFT…AELK), 254-347 (PEEI…AELT), and 352-437 (PGFL…AQLI). An N-linked (GlcNAc...) asparagine glycan is attached at asparagine 84. Disulfide bonds link cysteine 85-cysteine 140, cysteine 184-cysteine 232, and cysteine 281-cysteine 331. N-linked (GlcNAc...) asparagine glycosylation occurs at asparagine 221. A glycan (N-linked (GlcNAc...) asparagine) is linked at asparagine 337. Cysteine 373 and cysteine 421 are disulfide-bonded. Fibronectin type-III domains follow at residues 472–566 (APRD…TQPE), 572–662 (PAPN…TLSD), 667–762 (APQN…TFES), 772–862 (VPSS…RPHT), 887–986 (PPVG…LVPT), and 988–1085 (PPKD…TPKA). N-linked (GlcNAc...) asparagine glycosylation is found at asparagine 501 and asparagine 520. 2 N-linked (GlcNAc...) asparagine glycosylation sites follow: asparagine 670 and asparagine 746. Asparagine 940 carries an N-linked (GlcNAc...) asparagine glycan. The disordered stretch occupies residues 1072 to 1128 (GPMSEAVQFRTPKADSSDKMPNDQALGSAGKGSRLPDLGSDYKPPMSGSNSPHGSPT). Residues 1083-1092 (PKADSSDKMP) show a composition bias toward basic and acidic residues. Residues 1118 to 1128 (SGSNSPHGSPT) are compositionally biased toward polar residues. The chain crosses the membrane as a helical span at residues 1137-1157 (LVIIVSVGVITIVVVVVIAVF). Residues 1158-1492 (CTRRTTSHQK…MKDLNAITTA (335 aa)) are Cytoplasmic-facing. Disordered regions lie at residues 1205–1237 (PIDK…SMDS), 1266–1300 (PKMM…HSSS), and 1321–1396 (SMSL…FAVP). Residues serine 1209 and serine 1225 each carry the phosphoserine modification. Positions 1222 to 1237 (PRNSQDITPVDNSMDS) are enriched in polar residues. The residue at position 1229 (threonine 1229) is a Phosphothreonine. Polar residues-rich tracts occupy residues 1321-1353 (SMSL…TCCT) and 1361-1380 (ATSS…QSLP). Serine 1432 is subject to Phosphoserine. A Phosphothreonine modification is found at threonine 1435. A phosphoserine mark is found at serine 1463, serine 1465, and serine 1466.

This sequence belongs to the immunoglobulin superfamily. DCC family. In terms of assembly, interacts with BMP2, BMP4, BMP6, and BMP7. Interacts with RGMA and RGMB. Interacts with MYO10. In terms of tissue distribution, widely expressed.

It is found in the cell membrane. In terms of biological role, multi-functional cell surface receptor regulating cell adhesion in many diverse developmental processes, including neural tube and mammary gland formation, myogenesis and angiogenesis. Receptor for members of the BMP, netrin, and repulsive guidance molecule (RGM) families. Netrin-Neogenin interactions result in a chemoattractive axon guidance response and cell-cell adhesion, the interaction between NEO1/Neogenin and RGMa and RGMb induces a chemorepulsive response. The protein is Neogenin of Mus musculus (Mouse).